The primary structure comprises 60 residues: U1-theraphotoxin-Agm3a (60 aa).

Positions 1–21 are cleaved as a signal peptide; sequence MKFSVLVFILGLVLLLALSSA. The propeptide occupies 22–29; it reads TEMEENAR. 3 cysteine pairs are disulfide-bonded: Cys31-Cys45, Cys38-Cys50, and Cys44-Cys57.

Belongs to the neurotoxin 10 (Hwtx-1) family. 63 (VsTx1) subfamily. Expressed by the venom gland.

The protein resides in the secreted. In terms of biological role, inhibits sodium channels Nav1.7/SCN9A and potassium channels Kv11.1/KCNH2. Also binds the voltage-sensor domain of the potassium channel KvAP (from the archaeon Aeropyrum pernix) with very slow apparent binding kinetics and affects channel gating. Reaches its target by dynamically partitioning into anionic or zwitterionic headgroup lipid membranes. May bind to the open state of KvAP. The protein is U1-theraphotoxin-Agm3a of Acanthoscurria gomesiana (Tarantula spider).